The sequence spans 556 residues: Potassium-transporting ATPase potassium-binding subunit (556 aa).

The next 10 helical transmembrane spans lie at 6–26 (AGIA…VPLG), 65–85 (SVLA…LVQG), 133–153 (GLAV…IALV), 176–196 (LRIL…GGAI), 249–269 (PTPW…FSLP), 283–303 (VAIA…TMLL), 378–398 (GLYG…LMVG), 415–435 (LAAS…AIAM), 483–503 (ALGL…LALA), and 526–546 (FVGM…LPIL).

The protein belongs to the KdpA family. As to quaternary structure, the system is composed of three essential subunits: KdpA, KdpB and KdpC.

It is found in the cell membrane. Functionally, part of the high-affinity ATP-driven potassium transport (or Kdp) system, which catalyzes the hydrolysis of ATP coupled with the electrogenic transport of potassium into the cytoplasm. This subunit binds the extracellular potassium ions and delivers the ions to the membrane domain of KdpB through an intramembrane tunnel. This is Potassium-transporting ATPase potassium-binding subunit from Mycolicibacterium smegmatis (strain ATCC 700084 / mc(2)155) (Mycobacterium smegmatis).